A 546-amino-acid polypeptide reads, in one-letter code: Calcitonin receptor-like protein 1 (546 aa).

Topologically, residues 1–171 (MADATSPFNV…EVARNARKLE (171 aa)) are cytoplasmic. The helical transmembrane segment at 172 to 192 (FVGLGLSLVSLILAISIFSYF) threads the bilayer. Topologically, residues 193-205 (RRLRVFRNLLHLH) are extracellular. The helical transmembrane segment at 206-226 (LMIAMLMVVILRLVLYIDLIF) threads the bilayer. At 227–251 (TGENGPHTNSAEGKTINTMPIVCEG) the chain is on the cytoplasmic side. A helical membrane pass occupies residues 252 to 272 (MFFFLEYFKTVTFCWMFLEGI). Over 273 to 292 (YLNNQIVFGFFNSEPKLLPY) the chain is Extracellular. Residues 293-313 (FIAGYGIPLVHTMLWLLVVLI) traverse the membrane as a helical segment. Residues 314–333 (KKDFKVERCLGSYYLEPEFW) are Cytoplasmic-facing. Residues 334 to 354 (ILDGPRMAELVINLFFICNVI) traverse the membrane as a helical segment. The Extracellular portion of the chain corresponds to 355–377 (RVLYSKVRESNNTSEAGLKKSVK). N-linked (GlcNAc...) asparagine glycosylation is found at Asn365 and Asn366. Residues 378–398 (AAMMLLPLLGVPNIMQTIPFA) form a helical membrane-spanning segment. Residues 399–403 (PTRDN) lie on the Cytoplasmic side of the membrane. The helical transmembrane segment at 404-424 (IMVFAVWTYTASFTYMYQGLM) threads the bilayer. Topologically, residues 425-546 (VASIYCFTNK…EGSNRSTKSP (122 aa)) are extracellular. Residues Asn472 and Asn476 are each glycosylated (N-linked (GlcNAc...) asparagine). Positions 472–546 (NGTANASAPQ…EGSNRSTKSP (75 aa)) are disordered. Positions 473-485 (GTANASAPQTNNA) are enriched in polar residues. Positions 500–520 (KGSDDSTTKLMKDAVMEEEKN) are enriched in basic and acidic residues. N-linked (GlcNAc...) asparagine glycosylation is present at Asn540.

It belongs to the G-protein coupled receptor 2 family. As to expression, expression was observed in the mechanosensory neuron pairs PLM, ALM, FLP, OLQD, and OLQV, the chemosensory neurons PHA, PHB, RMEV, the ring motor neurons RMED, and the pharyngeal interneuron pair I1. Expression in sensory neurons PHA, PQR and URY are responsible for mate searching behavior. Expressed in AIY, RIM, RIA, and other neurons.

The protein localises to the cell membrane. G-protein coupled receptor for PDF neuropeptides. Plays a role in responses to environmental signals, including chemicals and touch, and in modulating locomotory behaviors. Capable of transducing signals via an adenylate cyclase acy-1 cAMP-dependent pathway. Required to regulate the sex-specific expression of TGFbeta-like daf-7 in the ASJ chemosensory neurons, perhaps acting via acy-1. Involved in modulating mate searching behavior independent of nutritional status. In the presence of food, plays a role in initiating and extending exploratory roaming behavior, perhaps acting in AIY, RIM, RIA, and other neurons, in opposition to 5-hydroxytryptamine (serotonin) signaling. Involved in mediating arousal from the sleep-like state called lethargus, which occurs during molting between larval and adult stages, in part by regulating touch sensitivity. May play a role in circadian rhythms of locomotor activity. Its function is as follows. G-protein coupled receptor which is activated by neuropeptides PDF-1 and PDF-2. Probably acts through the G-alpha(s) type of G proteins to elevate cAMP levels. Functionally, G-protein coupled receptor which is activated by neuropeptides PDF-1 and PDF-2; however, activation is lower compared to isoforms a and b. Probably inhibits cAMP levels through the G-alpha(i/o) type of G proteins. The chain is Calcitonin receptor-like protein 1 (pdfr-1) from Caenorhabditis elegans.